The following is a 148-amino-acid chain: Large ribosomal subunit protein bL9 (148 aa).

It belongs to the bacterial ribosomal protein bL9 family.

Its function is as follows. Binds to the 23S rRNA. The chain is Large ribosomal subunit protein bL9 from Clostridium beijerinckii (strain ATCC 51743 / NCIMB 8052) (Clostridium acetobutylicum).